The following is a 332-amino-acid chain: L-lactate dehydrogenase A chain (332 aa).

NAD(+) contacts are provided by residues 29–57 (GMVGMASAVSILLKDLCDELALVDVMEDK) and R99. Positions 106, 138, and 169 each coordinate substrate. N138 contributes to the NAD(+) binding site. H193 (proton acceptor) is an active-site residue. A substrate-binding site is contributed by T248.

It belongs to the LDH/MDH superfamily. LDH family. In terms of assembly, homotetramer.

Its subcellular location is the cytoplasm. The enzyme catalyses (S)-lactate + NAD(+) = pyruvate + NADH + H(+). It functions in the pathway fermentation; pyruvate fermentation to lactate; (S)-lactate from pyruvate: step 1/1. In terms of biological role, interconverts simultaneously and stereospecifically pyruvate and lactate with concomitant interconversion of NADH and NAD(+). The polypeptide is L-lactate dehydrogenase A chain (ldha) (Sphyraena lucasana (Lucas barracuda)).